The following is a 164-amino-acid chain: MADRLTQLQTCLDQLVEQFNATVNYINTSSEPSLLDEDPTSVSNIAASAPLPANQTQQGSTLGSNRQTVSPSTQAEAESNFENTINELSTDIILKSRQISMLIDSLPGIGVSPESQLKIIDDLSKELQSVEQEQVKKIQEKDKLLKWCESLIVEVATGISETRH.

The disordered stretch occupies residues alanine 49–phenylalanine 81. Over residues alanine 53–phenylalanine 81 the composition is skewed to polar residues. The stretch at glutamate 114–lysine 146 forms a coiled coil.

This sequence belongs to the Mediator complex subunit 21 family. In terms of assembly, component of the Mediator complex.

It localises to the nucleus. Its function is as follows. Component of the Mediator complex, a coactivator involved in the regulated transcription of nearly all RNA polymerase II-dependent genes. Mediator functions as a bridge to convey information from gene-specific regulatory proteins to the basal RNA polymerase II transcription machinery. Mediator is recruited to promoters by direct interactions with regulatory proteins and serves as a scaffold for the assembly of a functional preinitiation complex with RNA polymerase II and the general transcription factors. The chain is Mediator of RNA polymerase II transcription subunit 21 (SRB7) from Scheffersomyces stipitis (strain ATCC 58785 / CBS 6054 / NBRC 10063 / NRRL Y-11545) (Yeast).